The primary structure comprises 492 residues: Probable cobyric acid synthase (492 aa).

Residues 252 to 444 form the GATase cobBQ-type domain; that stretch reads PIEVNIVKFS…FHGILENFEF (193 aa). Cys-330 serves as the catalytic Nucleophile. His-436 is a catalytic residue.

It belongs to the CobB/CobQ family. CobQ subfamily.

It participates in cofactor biosynthesis; adenosylcobalamin biosynthesis. Its function is as follows. Catalyzes amidations at positions B, D, E, and G on adenosylcobyrinic A,C-diamide. NH(2) groups are provided by glutamine, and one molecule of ATP is hydrogenolyzed for each amidation. This is Probable cobyric acid synthase from Methanococcus maripaludis (strain C5 / ATCC BAA-1333).